The sequence spans 259 residues: UPF0014 membrane protein slr1647 (259 aa).

A run of 7 helical transmembrane segments spans residues 4–24, 34–54, 55–75, 98–118, 128–148, 195–215, and 225–245; these read ALIE…GAAI, LTGQ…VVGY, FLAV…LAIM, LWLS…VVII, YLIP…SLAG, MMVV…LAGG, and ILIM…VTAT.

Belongs to the UPF0014 family.

The protein resides in the cell membrane. The sequence is that of UPF0014 membrane protein slr1647 from Synechocystis sp. (strain ATCC 27184 / PCC 6803 / Kazusa).